The sequence spans 241 residues: Beta-nerve growth factor (241 aa).

The first 18 residues, 1-18 (MSMLFYTLITAFLIGIQA), serve as a signal peptide directing secretion. A propeptide spanning residues 19 to 121 (EPHSESNVPA…PFNRTHRSKR (103 aa)) is cleaved from the precursor. N-linked (GlcNAc...) asparagine glycosylation is found at Asn-69 and Asn-114. 3 disulfides stabilise this stretch: Cys-136/Cys-201, Cys-179/Cys-229, and Cys-189/Cys-231. A 1-acyl-sn-glycero-3-phospho-(1D-myo-inositol)-binding residues include Tyr-173 and Lys-209. A 1-acyl-sn-glycero-3-phospho-L-serine is bound at residue Lys-209.

This sequence belongs to the NGF-beta family. In terms of assembly, homodimer. The homodimer interacts with a single NTRK1 chain. The homodimer interacts with a single NGFR chain. The NGF dimer interacts with a single SORCS2 chain (via extracellular domain). The NGF precursor (proNGF) binds to a receptor complex formed by SORT1 and NGFR, which leads to NGF endocytosis. Both mature NGF and the immature NGF precursor (proNGF) interact with SORCS2 and with the heterodimer formed by SORCS2 and NGFR (via extracellular domains). The NGF precursor (proNGF) has much higher affinity for SORCS2 than mature NGF. The NGF precursor (proNGF) has much higher affinity for SORT1 than mature NGF. Interacts with ADAM10 in a divalent cation-dependent manner. Interaction with SORCS3.

It is found in the secreted. It localises to the endosome lumen. Functionally, nerve growth factor is important for the development and maintenance of the sympathetic and sensory nervous systems. Extracellular ligand for the NTRK1 and NGFR receptors, activates cellular signaling cascades to regulate neuronal proliferation, differentiation and survival. The immature NGF precursor (proNGF) functions as a ligand for the heterodimeric receptor formed by SORCS2 and NGFR, and activates cellular signaling cascades that lead to inactivation of RAC1 and/or RAC2, reorganization of the actin cytoskeleton and neuronal growth cone collapse. In contrast to mature NGF, the precursor form (proNGF) promotes neuronal apoptosis (in vitro). Inhibits metalloproteinase-dependent proteolysis of platelet glycoprotein VI. Binds lysophosphatidylinositol and lysophosphatidylserine between the two chains of the homodimer. The lipid-bound form promotes histamine relase from mast cells, contrary to the lipid-free form. The protein is Beta-nerve growth factor (NGF) of Homo sapiens (Human).